Consider the following 214-residue polypeptide: Oocyte zinc finger protein XlCOF10 (214 aa).

7 consecutive C2H2-type zinc fingers follow at residues 1 to 23 (FSCSQCDESFVQRSELELHRQLH), 29 to 51 (FTCSECGKCFKRFSLLKEHHRIH), 57 to 79 (FTCDECGKCFTQKSHMTAHQKSH), 85 to 107 (FCCSECGKHFKQNSQLVVHQRTH), 113 to 135 (FTCTESGQWFKLQSYLTEHQKSH), 141 to 163 (FSCSDCGKCFKRHSLFIEHQRIH), and 169 to 191 (FSCSVCEKTFTRRSHLTAHEKCH).

The protein belongs to the krueppel C2H2-type zinc-finger protein family.

Its subcellular location is the nucleus. May be involved in transcriptional regulation. The chain is Oocyte zinc finger protein XlCOF10 from Xenopus laevis (African clawed frog).